A 202-amino-acid chain; its full sequence is Protein Thf1 (202 aa).

Residues 174–202 (IYKSSILKMEQAKELLQEAKIKDKKEKKK) are a coiled coil.

Belongs to the THF1 family.

In terms of biological role, may be involved in photosynthetic membrane biogenesis. This Prochlorococcus marinus subsp. pastoris (strain CCMP1986 / NIES-2087 / MED4) protein is Protein Thf1.